A 157-amino-acid polypeptide reads, in one-letter code: Protein GrpE (157 aa).

Residues 1-10 (MQEENQHPEQ) show a composition bias toward basic and acidic residues. A disordered region spans residues 1 to 21 (MQEENQHPEQDDISEAQDAGA).

It belongs to the GrpE family. As to quaternary structure, homodimer.

It localises to the cytoplasm. Its function is as follows. Participates actively in the response to hyperosmotic and heat shock by preventing the aggregation of stress-denatured proteins, in association with DnaK and GrpE. It is the nucleotide exchange factor for DnaK and may function as a thermosensor. Unfolded proteins bind initially to DnaJ; upon interaction with the DnaJ-bound protein, DnaK hydrolyzes its bound ATP, resulting in the formation of a stable complex. GrpE releases ADP from DnaK; ATP binding to DnaK triggers the release of the substrate protein, thus completing the reaction cycle. Several rounds of ATP-dependent interactions between DnaJ, DnaK and GrpE are required for fully efficient folding. This is Protein GrpE from Methylovorus sp. (strain SS1 / DSM 11726).